The following is a 187-amino-acid chain: NADH-dependent FMN reductase SfnF (187 aa).

It belongs to the SsuE family.

It carries out the reaction FMNH2 + NAD(+) = FMN + NADH + 2 H(+). Functionally, involved in the dimethyl sulfide degradation pathway. Catalyzes the NADH-dependent reduction of FMN. In Pseudomonas fluorescens (strain Pf0-1), this protein is NADH-dependent FMN reductase SfnF.